Consider the following 152-residue polypeptide: Deoxyuridine 5'-triphosphate nucleotidohydrolase (152 aa).

Substrate contacts are provided by residues 72–74 (RSG), N85, and 89–91 (TID).

It belongs to the dUTPase family. It depends on Mg(2+) as a cofactor.

It carries out the reaction dUTP + H2O = dUMP + diphosphate + H(+). The protein operates within pyrimidine metabolism; dUMP biosynthesis; dUMP from dCTP (dUTP route): step 2/2. In terms of biological role, this enzyme is involved in nucleotide metabolism: it produces dUMP, the immediate precursor of thymidine nucleotides and it decreases the intracellular concentration of dUTP so that uracil cannot be incorporated into DNA. In Rhodopseudomonas palustris (strain BisB18), this protein is Deoxyuridine 5'-triphosphate nucleotidohydrolase.